The primary structure comprises 608 residues: uncharacterized protein (608 aa).

Residues L4 to D24 traverse the membrane as a helical segment.

It to M.jannaschii MJ1394 and A.fulgidus AF2028.

Its subcellular location is the membrane. This is an uncharacterized protein from Methanocaldococcus jannaschii (strain ATCC 43067 / DSM 2661 / JAL-1 / JCM 10045 / NBRC 100440) (Methanococcus jannaschii).